The primary structure comprises 1272 residues: Regulator of nonsense transcripts 2 (1272 aa).

Residues 1-114 (MPAERKKPAS…QEEQAKRQQE (114 aa)) are compositionally biased toward basic and acidic residues. Disordered stretches follow at residues 1–126 (MPAE…EKEE), 370–389 (DHRELQNTERQNRRILHSKG), 423–445 (NMPDLPQDKPTPEEHGPGIDIFT), and 490–517 (CQNKESNKDDTKEAKESKENKEVSSPDD). A coiled-coil region spans residues 54–134 (EDKKKRLEDD…EESIQLHQEA (81 aa)). Residues 94–133 (KKKHQEEERKKQEEQAKRQQEEEAAAQMKEKEESIQLHQE) form a sufficient for interaction with UPF1 region. The 264-residue stretch at 168–431 (LKKNTAFVKK…ENMPDLPQDK (264 aa)) folds into the MIF4G 1 domain. 2 stretches are compositionally biased toward basic and acidic residues: residues 428-439 (PQDKPTPEEHGP) and 490-513 (CQNKESNKDDTKEAKESKENKEVS). The stretch at 487-559 (EKSCQNKESN…EQEQEDEEAS (73 aa)) forms a coiled coil. 2 consecutive MIF4G domains span residues 569 to 758 (DAFL…CNPP) and 773 to 986 (EYVR…LRPK). The sufficient for interaction with UPF3A and UPF3B stretch occupies residues 711–928 (GRFLFRSPES…IRLVCTILDT (218 aa)). Positions 757–1272 (PPPAEKTVKK…LIFKTGGRRR (516 aa)) are sufficient for interaction with EIF4A1 and EIF1. The binds to UPF3B stretch occupies residues 839–859 (EDVGIHVVDGVLEDIRLGMEV). Residues 1018 to 1098 (DSKDSMTEGE…DEENTEVMIK (81 aa)) are disordered. A compositionally biased stretch (acidic residues) spans 1027–1076 (ENLEEDEEEEEGGAETEEQSGNESEVNEPEEEEGSDNDDDEGEEEEEENT). The interval 1084–1272 (KENETDEENT…LIFKTGGRRR (189 aa)) is sufficient for interaction with UPF1 C-terminus. The residue at position 1088 (Thr1088) is a Phosphothreonine. Interaction with UPF1 regions lie at residues 1105–1129 (VPCVEDEDFIQALDKMMLENLQQRS) and 1167–1207 (DTMP…AEQE). Residues 1105–1198 (VPCVEDEDFI…PMSSQLAANH (94 aa)) form a necessary for interaction with UPF1 region. Residues 1220 to 1272 (NERQEQEDYQEMLQSLAQRPAPANTNRERRPRYQHPKGAPNADLIFKTGGRRR) are disordered.

Found in a post-splicing messenger ribonucleoprotein (mRNP) complex. Associates with the exon junction complex (EJC). Interacts with SMG1, EST1A, UPF1, UPF3A, UPF3B, EIF4A1 and EIF1. As to expression, ubiquitous.

It localises to the cytoplasm. Its subcellular location is the perinuclear region. Its function is as follows. Involved in nonsense-mediated decay (NMD) of mRNAs containing premature stop codons by associating with the nuclear exon junction complex (EJC). Recruited by UPF3B associated with the EJC core at the cytoplasmic side of the nuclear envelope and the subsequent formation of an UPF1-UPF2-UPF3 surveillance complex (including UPF1 bound to release factors at the stalled ribosome) is believed to activate NMD. In cooperation with UPF3B stimulates both ATPase and RNA helicase activities of UPF1. Binds spliced mRNA. The sequence is that of Regulator of nonsense transcripts 2 from Homo sapiens (Human).